The chain runs to 460 residues: TNF receptor-associated factor family protein DDB_G0290883 (460 aa).

The RING-type; degenerate zinc-finger motif lies at cysteine 27 to lysine 67. 2 TRAF-type zinc fingers span residues serine 141 to leucine 194 and threonine 196 to glutamine 253. The MATH domain occupies glycine 320–isoleucine 448.

The protein belongs to the TNF receptor-associated factor family. A subfamily.

It is found in the cytoplasm. Functionally, probable adapter protein and signal transducer that links members of the tumor necrosis factor receptor family to different signaling pathways by association with the receptor cytoplasmic domain and kinases. This Dictyostelium discoideum (Social amoeba) protein is TNF receptor-associated factor family protein DDB_G0290883.